Here is an 87-residue protein sequence, read N- to C-terminus: Large ribosomal subunit protein eL31 (87 aa).

Belongs to the eukaryotic ribosomal protein eL31 family.

This chain is Large ribosomal subunit protein eL31, found in Methanocorpusculum labreanum (strain ATCC 43576 / DSM 4855 / Z).